We begin with the raw amino-acid sequence, 434 residues long: E3 ubiquitin-protein ligase siah-1 (434 aa).

The segment at 27 to 88 (FEEDENAGPE…NGNTPSVTIP (62 aa)) is disordered. Over residues 43-55 (SSSSASSQRSSAS) the composition is skewed to low complexity. Residues 74–88 (MSNNQNGNTPSVTIP) are compositionally biased toward polar residues. The RING-type; degenerate zinc finger occupies 171–206 (CPVCLEYMLPPYMQCPSGHLVCSNCRPKLQCCPTCR). Residues 220-415 (IANTVRFPCK…LGINVTISRI (196 aa)) form an SBD region. The SIAH-type; degenerate zinc finger occupies 223–283 (TVRFPCKFSN…VMDHLKKVHK (61 aa)). Residues Cys-228, Cys-235, His-247, Cys-251, Cys-258, Cys-265, His-277, and His-282 each contribute to the Zn(2+) site.

It belongs to the SINA (Seven in absentia) family. As to quaternary structure, interacts with tir-1.

The enzyme catalyses S-ubiquitinyl-[E2 ubiquitin-conjugating enzyme]-L-cysteine + [acceptor protein]-L-lysine = [E2 ubiquitin-conjugating enzyme]-L-cysteine + N(6)-ubiquitinyl-[acceptor protein]-L-lysine.. It functions in the pathway protein modification; protein ubiquitination. E3 ubiquitin-protein ligase that mediates ubiquitination and subsequent proteasomal degradation of target proteins. E3 ubiquitin ligases accept ubiquitin from an E2 ubiquitin-conjugating enzyme in the form of a thioester and then directly transfers the ubiquitin to targeted substrates. It probably triggers the ubiquitin-mediated degradation of different substrates. This chain is E3 ubiquitin-protein ligase siah-1, found in Caenorhabditis briggsae.